The chain runs to 691 residues: Elongation factor G (691 aa).

The region spanning 6 to 281 (SRYRNIGIMA…GVVDFLPSPI (276 aa)) is the tr-type G domain. GTP is bound by residues 15–22 (AHIDAGKT), 79–83 (DTPGH), and 133–136 (NKMD).

Belongs to the TRAFAC class translation factor GTPase superfamily. Classic translation factor GTPase family. EF-G/EF-2 subfamily.

The protein localises to the cytoplasm. Functionally, catalyzes the GTP-dependent ribosomal translocation step during translation elongation. During this step, the ribosome changes from the pre-translocational (PRE) to the post-translocational (POST) state as the newly formed A-site-bound peptidyl-tRNA and P-site-bound deacylated tRNA move to the P and E sites, respectively. Catalyzes the coordinated movement of the two tRNA molecules, the mRNA and conformational changes in the ribosome. The polypeptide is Elongation factor G (Wolbachia pipientis subsp. Culex pipiens (strain wPip)).